The following is a 456-amino-acid chain: tRNA modification GTPase MnmE (456 aa).

Residues Arg25, Glu82, and Lys121 each contribute to the (6S)-5-formyl-5,6,7,8-tetrahydrofolate site. Residues 217–379 enclose the TrmE-type G domain; that stretch reads GMKVVIAGRP…LKAHLKSVMG (163 aa). A K(+)-binding site is contributed by Asn227. Residues 227-232, 246-252, and 271-274 contribute to the GTP site; these read NAGKSS, TNIAGTT, and DTAG. Ser231 provides a ligand contact to Mg(2+). Thr246, Ile248, and Thr251 together coordinate K(+). Residue Thr252 participates in Mg(2+) binding. Lys456 is a binding site for (6S)-5-formyl-5,6,7,8-tetrahydrofolate.

The protein belongs to the TRAFAC class TrmE-Era-EngA-EngB-Septin-like GTPase superfamily. TrmE GTPase family. In terms of assembly, homodimer. Heterotetramer of two MnmE and two MnmG subunits. The cofactor is K(+).

The protein resides in the cytoplasm. In terms of biological role, exhibits a very high intrinsic GTPase hydrolysis rate. Involved in the addition of a carboxymethylaminomethyl (cmnm) group at the wobble position (U34) of certain tRNAs, forming tRNA-cmnm(5)s(2)U34. The sequence is that of tRNA modification GTPase MnmE from Saccharophagus degradans (strain 2-40 / ATCC 43961 / DSM 17024).